Here is a 483-residue protein sequence, read N- to C-terminus: MGKKLKYTKFQLRSNVVKPNICMSLTTDIAGEAKLKDLERQKKGDARTVVAIILGGGAGTRLFPLTKRRAKPAVPMGGAYRLIDVPMSNCINSGINKVYILTQFNSASLNRHIARAYNFGNGVTFESGYVEVLAATQTPGELGKRWFQGTAHAVRQFHWLFEDARSKDIEDVLILSGDHLYRMDYLHFVQSHRQSGADITISSLPIDDSRASDFGLMKIDDTGRVMSFSEKPKGDDLKAMAVDTTVLGLSPEEAKEKPYIASIGKVYVFKKDILLNLLRWRFPTANDFGSEIIPASTKEFCVKAYLFNDYWEDIGTIRSFFRANLALTEHPPRFSFYDATKPIYTSRRNLPPSAIDNSKIVDSIVSHGIFLTNCFVEHSVVGIRSRIGTNVHLKDTVMLGADYYETDAEIRSQLAEGKVPLGIGENTRIKDCIIDKNARIGKNVVIANSEGVQEADRSSEGFYMASGITVISKNSTIPDGTVI.

It belongs to the bacterial/plant glucose-1-phosphate adenylyltransferase family. In terms of assembly, heterotetramer. As to expression, tubers.

It is found in the plastid. The protein resides in the chloroplast. The protein localises to the amyloplast. The catalysed reaction is alpha-D-glucose 1-phosphate + ATP + H(+) = ADP-alpha-D-glucose + diphosphate. Its pathway is glycan biosynthesis; starch biosynthesis. Its activity is regulated as follows. Activated by 3'phosphoglycerate, inhibited by orthophosphate. Allosteric regulation. Its function is as follows. This protein plays a role in synthesis of starch. It catalyzes the synthesis of the activated glycosyl donor, ADP-glucose from Glc-1-P and ATP. The protein is Glucose-1-phosphate adenylyltransferase large subunit 3, chloroplastic/amyloplastic (AGPS3) of Solanum tuberosum (Potato).